The primary structure comprises 737 residues: Phosphoribosylformylglycinamidine synthase subunit PurL (737 aa).

His50 is an active-site residue. Residues Tyr53 and Lys92 each contribute to the ATP site. Glu94 is a Mg(2+) binding site. Substrate is bound by residues 95 to 98 (SHNH) and Arg117. His96 functions as the Proton acceptor in the catalytic mechanism. Position 118 (Asp118) interacts with Mg(2+). Gln241 contributes to the substrate binding site. Asp269 provides a ligand contact to Mg(2+). 313-315 (ESQ) provides a ligand contact to substrate. Asp495 and Gly532 together coordinate ATP. Asn533 provides a ligand contact to Mg(2+). Ser535 is a binding site for substrate.

Belongs to the FGAMS family. Monomer. Part of the FGAM synthase complex composed of 1 PurL, 1 PurQ and 2 PurS subunits.

Its subcellular location is the cytoplasm. It catalyses the reaction N(2)-formyl-N(1)-(5-phospho-beta-D-ribosyl)glycinamide + L-glutamine + ATP + H2O = 2-formamido-N(1)-(5-O-phospho-beta-D-ribosyl)acetamidine + L-glutamate + ADP + phosphate + H(+). It functions in the pathway purine metabolism; IMP biosynthesis via de novo pathway; 5-amino-1-(5-phospho-D-ribosyl)imidazole from N(2)-formyl-N(1)-(5-phospho-D-ribosyl)glycinamide: step 1/2. Its function is as follows. Part of the phosphoribosylformylglycinamidine synthase complex involved in the purines biosynthetic pathway. Catalyzes the ATP-dependent conversion of formylglycinamide ribonucleotide (FGAR) and glutamine to yield formylglycinamidine ribonucleotide (FGAM) and glutamate. The FGAM synthase complex is composed of three subunits. PurQ produces an ammonia molecule by converting glutamine to glutamate. PurL transfers the ammonia molecule to FGAR to form FGAM in an ATP-dependent manner. PurS interacts with PurQ and PurL and is thought to assist in the transfer of the ammonia molecule from PurQ to PurL. The chain is Phosphoribosylformylglycinamidine synthase subunit PurL from Bartonella bacilliformis (strain ATCC 35685 / KC583 / Herrer 020/F12,63).